The primary structure comprises 510 residues: MPTSGTTIELIDDQFPKDDSASSGIVDEVDLTEANILATGLNKKAPRIVNGFGSLMGSKEMVSVEFDKKGNEKKSNLDRLLEKDNQEKEEAKTKIHISEQPWTLNNWHQHLNWLNMVLVCGMPMIGWYFALSGKVPLHLNVFLFSVFYYAVGGVSITAGYHRLWSHRSYSAHWPLRLFYAIFGCASVEGSAKWWGHSHRIHHRYTDTLRDPYDARRGLWYSHMGWMLLKPNPKYKARADITDMTDDWTIRFQHRHYILLMLLTAFVIPTLICGYFFNDYMGGLIYAGFIRVFVIQQATFCINSLAHYIGTQPFDDRRTPRDNWITAIVTFGEGYHNFHHEFPTDYRNAIKWYQYDPTKVIIYLTSLVGLAYDLKKFSQNAIEEALIQQEQKKINKKKAKINWGPVLTDLPMWDKQTFLAKSKENKGLVIISGIVHDVSGYISEHPGGETLIKTALGKDATKAFSGGVYRHSNAAQNVLADMRVAVIKESKNSAIRMASKRGEIYETGKFF.

Residues methionine 1 to asparagine 112 are Cytoplasmic-facing. A helical transmembrane segment spans residues tryptophan 113–glycine 133. Topologically, residues lysine 134–histidine 138 are lumenal. Residues leucine 139–glycine 159 form a helical membrane-spanning segment. The Cytoplasmic portion of the chain corresponds to tyrosine 160–histidine 255. Fe cation contacts are provided by histidine 161, histidine 166, histidine 198, histidine 201, and histidine 202. The Histidine box-1 signature appears at histidine 161–histidine 166. Positions histidine 198–histidine 202 match the Histidine box-2 motif. A helical membrane pass occupies residues tyrosine 256–phenylalanine 276. At asparagine 277 to methionine 280 the chain is on the lumenal side. A helical transmembrane segment spans residues glycine 281 to isoleucine 301. Residues asparagine 302–phenylalanine 510 are Cytoplasmic-facing. Fe cation contacts are provided by histidine 306, histidine 335, histidine 338, and histidine 339. A Histidine box-3 motif is present at residues histidine 335–histidine 339. The region spanning leucine 409–lysine 487 is the Cytochrome b5 heme-binding domain. Residues histidine 444 and histidine 470 each contribute to the heme site.

The protein belongs to the fatty acid desaturase type 1 family. It depends on Fe(2+) as a cofactor.

It localises to the endoplasmic reticulum membrane. It catalyses the reaction octadecanoyl-CoA + 2 Fe(II)-[cytochrome b5] + O2 + 2 H(+) = (9Z)-octadecenoyl-CoA + 2 Fe(III)-[cytochrome b5] + 2 H2O. The catalysed reaction is hexadecanoyl-CoA + 2 Fe(II)-[cytochrome b5] + O2 + 2 H(+) = (9Z)-hexadecenoyl-CoA + 2 Fe(III)-[cytochrome b5] + 2 H2O. Functionally, stearoyl-CoA desaturase that utilizes O(2) and electrons from reduced cytochrome b5 to introduce the first double bond into saturated fatty acyl-CoA substrates. Catalyzes the insertion of a cis double bond at the delta-9 position into fatty acyl-CoA substrates including palmitoyl-CoA and stearoyl-CoA. Required for the biosynthesis of membrane phospholipids, cholesterol esters and triglycerides. Regulates fatty acid desaturation, that is, the ratio of unsaturated versus saturated fatty acyl chains, by competing with the acyltransferase STC1 for the common substrate C16:0-CoA. SCT1 sequesters C16:0-CoA into lipids, thereby shielding it from desaturation by OLE1. The sequence is that of Acyl-CoA desaturase 1 (OLE1) from Saccharomyces cerevisiae (strain ATCC 204508 / S288c) (Baker's yeast).